We begin with the raw amino-acid sequence, 316 residues long: Transaldolase (316 aa).

Lys-126 functions as the Schiff-base intermediate with substrate in the catalytic mechanism.

It belongs to the transaldolase family. Type 1 subfamily. In terms of assembly, homodimer.

Its subcellular location is the cytoplasm. It carries out the reaction D-sedoheptulose 7-phosphate + D-glyceraldehyde 3-phosphate = D-erythrose 4-phosphate + beta-D-fructose 6-phosphate. It participates in carbohydrate degradation; pentose phosphate pathway; D-glyceraldehyde 3-phosphate and beta-D-fructose 6-phosphate from D-ribose 5-phosphate and D-xylulose 5-phosphate (non-oxidative stage): step 2/3. Functionally, transaldolase is important for the balance of metabolites in the pentose-phosphate pathway. This Methylibium petroleiphilum (strain ATCC BAA-1232 / LMG 22953 / PM1) protein is Transaldolase.